Reading from the N-terminus, the 86-residue chain is Weak neurotoxin 5 (86 aa).

The signal sequence occupies residues 1–21 (MKTLLLTLVVVTIVCLDLGYT). Cystine bridges form between Cys-24/Cys-45, Cys-27/Cys-32, Cys-38/Cys-63, Cys-67/Cys-78, and Cys-79/Cys-84.

It belongs to the three-finger toxin family. Ancestral subfamily. Orphan group II sub-subfamily. In terms of tissue distribution, expressed by the venom gland.

The protein localises to the secreted. In terms of biological role, binds with low affinity to muscular and very low affinity to neuronal (alpha-7/CHRNA7) nicotinic acetylcholine receptor (nAChR). In Naja sputatrix (Malayan spitting cobra), this protein is Weak neurotoxin 5.